The primary structure comprises 161 residues: MSEAGAASEAVRDAALRLLARREHTRRELAQKLARRGHDPGYVHPVLEALAEEGLLDEGRFAEVFVRSRVERGQGPVRIAQELRQRGVADGVIDEVLEDAEVDWLAQARAVRERRFGAGVPADRREALRQAQFLQRRGFTADQVRAAAAAADEDDERGPYG.

This sequence belongs to the RecX family.

Its subcellular location is the cytoplasm. Modulates RecA activity. The protein is Regulatory protein RecX of Halorhodospira halophila (strain DSM 244 / SL1) (Ectothiorhodospira halophila (strain DSM 244 / SL1)).